Here is a 649-residue protein sequence, read N- to C-terminus: Probable potassium transport system protein Kup (649 aa).

Helical transmembrane passes span 1–21 (MAIVALGVVYGDIGTSPLYTM), 42–62 (ILSLVFWSITLITTVKYVFIA), 84–104 (GAWLAIPAMLGGAAFLADSVL), 126–146 (IMSGNKELTLMITIVIIVCLF), 159–179 (TFGTVVMIWFSFLAVVGLVNL), 195–215 (VEFLFSHHNAAGLAVMGTVFL), 235–255 (IYFTWPFIKIALVFCYFGQGA), 286–306 (VAVLLSVCAGVIASQALITGA), 334–354 (LYIPVVNAVLCVSTLLVLAMF), 364–384 (YGLALTVTMITTTILLAVYIW), 390–410 (VGAVVFTVVFLAIQFLFFFAS), and 414–434 (FLHGGWFTMLLTLAILLIMYT).

It belongs to the HAK/KUP transporter (TC 2.A.72) family.

The protein resides in the cell membrane. It carries out the reaction K(+)(in) + H(+)(in) = K(+)(out) + H(+)(out). Functionally, transport of potassium into the cell. Likely operates as a K(+):H(+) symporter. This chain is Probable potassium transport system protein Kup, found in Bifidobacterium adolescentis (strain ATCC 15703 / DSM 20083 / NCTC 11814 / E194a).